Consider the following 285-residue polypeptide: Glutamate racemase (285 aa).

Residues 28-29 (DS) and 60-61 (YG) contribute to the substrate site. The Proton donor/acceptor role is filled by cysteine 92. 93 to 94 (NT) is a substrate binding site. Catalysis depends on cysteine 204, which acts as the Proton donor/acceptor. 205 to 206 (TH) provides a ligand contact to substrate.

It belongs to the aspartate/glutamate racemases family.

It catalyses the reaction L-glutamate = D-glutamate. It functions in the pathway cell wall biogenesis; peptidoglycan biosynthesis. In terms of biological role, provides the (R)-glutamate required for cell wall biosynthesis. The chain is Glutamate racemase from Escherichia coli (strain UTI89 / UPEC).